We begin with the raw amino-acid sequence, 343 residues long: 4-hydroxy-2-oxovalerate aldolase 2 (343 aa).

Residues 8 to 260 (ITVHDMSLRD…ETGVDVFAIS (253 aa)) form the Pyruvate carboxyltransferase domain. Position 16–17 (16–17 (RD)) interacts with substrate. Mn(2+) is bound at residue Asp17. Catalysis depends on His20, which acts as the Proton acceptor. The substrate site is built by Ser170 and His199. Mn(2+) contacts are provided by His199 and His201. Position 290 (Tyr290) interacts with substrate.

The protein belongs to the 4-hydroxy-2-oxovalerate aldolase family.

The catalysed reaction is (S)-4-hydroxy-2-oxopentanoate = acetaldehyde + pyruvate. This is 4-hydroxy-2-oxovalerate aldolase 2 from Burkholderia lata (strain ATCC 17760 / DSM 23089 / LMG 22485 / NCIMB 9086 / R18194 / 383).